A 473-amino-acid chain; its full sequence is Alliin lyase 2 (473 aa).

Positions 1-15 (MICLVILTCIIMSNS) are cleaved as a signal peptide. The propeptide occupies 16–25 (FVNNNNMVQA). In terms of domain architecture, EGF-like; atypical spans 38-84 (EAVANINCSEHGRAFLDGIISEGSPKCECNTCYTGPDCSEKIQGCSA). Asn44 is a glycosylation site (N-linked (GlcNAc...) asparagine). 3 disulfides stabilise this stretch: Cys45–Cys64, Cys66–Cys75, and Cys69–Cys82. 117–125 (YFFNPVSNF) serves as a coordination point for chloride. Asn171 and Asn216 each carry an N-linked (GlcNAc...) asparagine glycan. Lys276 is modified (N6-(pyridoxal phosphate)lysine). Asn353 is a glycosylation site (N-linked (GlcNAc...) asparagine). An intrachain disulfide couples Cys393 to Cys401.

It belongs to the alliinase family. Homodimer. The cofactor is pyridoxal 5'-phosphate. Post-translationally, glycosylated. As to expression, high expression in bulbs, lower expression in leaves, and no expression in roots.

It is found in the vacuole. It catalyses the reaction an S-alkyl-L-cysteine S-oxide = an S-alkyl sulfenate + 2-aminoprop-2-enoate. The catalysed reaction is alliin = allylsulfenate + 2-aminoprop-2-enoate. Able to cleave the C-S bond of sulfoxide derivatives of Cys to produce allicin, thus giving rise to all sulfur compounds which are responsible for most of the properties of garlic, such as the specific smell and flavor as well as the health benefits like blood lipid or blood pressure lowering. This Allium sativum (Garlic) protein is Alliin lyase 2.